A 205-amino-acid polypeptide reads, in one-letter code: ATP-dependent Clp protease proteolytic subunit (205 aa).

Serine 101 (nucleophile) is an active-site residue. The active site involves histidine 126.

Belongs to the peptidase S14 family. In terms of assembly, component of the chloroplastic Clp protease core complex.

The protein resides in the plastid. The protein localises to the chloroplast stroma. The catalysed reaction is Hydrolysis of proteins to small peptides in the presence of ATP and magnesium. alpha-casein is the usual test substrate. In the absence of ATP, only oligopeptides shorter than five residues are hydrolyzed (such as succinyl-Leu-Tyr-|-NHMec, and Leu-Tyr-Leu-|-Tyr-Trp, in which cleavage of the -Tyr-|-Leu- and -Tyr-|-Trp bonds also occurs).. Functionally, cleaves peptides in various proteins in a process that requires ATP hydrolysis. Has a chymotrypsin-like activity. Plays a major role in the degradation of misfolded proteins. The sequence is that of ATP-dependent Clp protease proteolytic subunit from Pinus contorta (Shore pine).